A 661-amino-acid polypeptide reads, in one-letter code: 1-deoxy-D-xylulose-5-phosphate synthase (661 aa).

Residues H98 and A139–S141 contribute to the thiamine diphosphate site. Mg(2+) is bound at residue D170. Thiamine diphosphate contacts are provided by residues G171–A172, N199, Y309, and E391. N199 contacts Mg(2+).

This sequence belongs to the transketolase family. DXPS subfamily. Homodimer. Mg(2+) is required as a cofactor. Thiamine diphosphate serves as cofactor.

It catalyses the reaction D-glyceraldehyde 3-phosphate + pyruvate + H(+) = 1-deoxy-D-xylulose 5-phosphate + CO2. It functions in the pathway metabolic intermediate biosynthesis; 1-deoxy-D-xylulose 5-phosphate biosynthesis; 1-deoxy-D-xylulose 5-phosphate from D-glyceraldehyde 3-phosphate and pyruvate: step 1/1. Functionally, catalyzes the acyloin condensation reaction between C atoms 2 and 3 of pyruvate and glyceraldehyde 3-phosphate to yield 1-deoxy-D-xylulose-5-phosphate (DXP). In Bradyrhizobium diazoefficiens (strain JCM 10833 / BCRC 13528 / IAM 13628 / NBRC 14792 / USDA 110), this protein is 1-deoxy-D-xylulose-5-phosphate synthase.